The primary structure comprises 162 residues: Ribonuclease (162 aa).

Residues Met-1–Ala-29 form the signal peptide. Positions Glu-30–Leu-53 are excised as a propeptide. The active-site Proton acceptor is the Glu-125. His-154 (proton donor) is an active-site residue.

It belongs to the ribonuclease N1/T1 family.

The protein localises to the secreted. In terms of biological role, this is a purine-specific ribonuclease. This Bacillus intermedius protein is Ribonuclease.